The sequence spans 171 residues: Protein BTG1 (171 aa).

Ser159 carries the phosphoserine modification.

This sequence belongs to the BTG family. Interacts with CNOT7 and CNOT8.

Functionally, anti-proliferative protein. This is Protein BTG1 (Btg1) from Rattus norvegicus (Rat).